Reading from the N-terminus, the 403-residue chain is Na(+)-translocating NADH-quinone reductase subunit B (403 aa).

The next 9 helical transmembrane spans lie at 56 to 76 (MMII…YNVG), 121 to 141 (AYFL…EVLF), 164 to 184 (LPPS…VVLG), 225 to 245 (GFAG…NILG), 260 to 280 (GSMG…LLLT), 287 to 307 (IVAG…AIGS), 312 to 332 (MFAM…GMIF), 348 to 368 (WLFG…NPAF), and 371 to 391 (GMML…HFVV). The residue at position 230 (threonine 230) is an FMN phosphoryl threonine.

This sequence belongs to the NqrB/RnfD family. As to quaternary structure, composed of six subunits; NqrA, NqrB, NqrC, NqrD, NqrE and NqrF. FMN serves as cofactor.

Its subcellular location is the cell inner membrane. It carries out the reaction a ubiquinone + n Na(+)(in) + NADH + H(+) = a ubiquinol + n Na(+)(out) + NAD(+). Its function is as follows. NQR complex catalyzes the reduction of ubiquinone-1 to ubiquinol by two successive reactions, coupled with the transport of Na(+) ions from the cytoplasm to the periplasm. NqrA to NqrE are probably involved in the second step, the conversion of ubisemiquinone to ubiquinol. This Pseudomonas paraeruginosa (strain DSM 24068 / PA7) (Pseudomonas aeruginosa (strain PA7)) protein is Na(+)-translocating NADH-quinone reductase subunit B.